Reading from the N-terminus, the 360-residue chain is Peptide chain release factor 1 (360 aa).

At glutamine 236 the chain carries N5-methylglutamine.

This sequence belongs to the prokaryotic/mitochondrial release factor family. Methylated by PrmC. Methylation increases the termination efficiency of RF1.

It is found in the cytoplasm. Functionally, peptide chain release factor 1 directs the termination of translation in response to the peptide chain termination codons UAG and UAA. The polypeptide is Peptide chain release factor 1 (Ligilactobacillus salivarius (strain UCC118) (Lactobacillus salivarius)).